The following is a 138-amino-acid chain: Thyrotropin subunit beta (138 aa).

The signal sequence occupies residues 1-20 (MTAIFLMSMVFGLACGQTMS). 6 cysteine pairs are disulfide-bonded: C22–C72, C36–C87, C39–C125, C47–C103, C51–C105, and C108–C115. N-linked (GlcNAc...) asparagine glycosylation occurs at N43. Residues 133 to 138 (VVEFSI) constitute a propeptide that is removed on maturation.

This sequence belongs to the glycoprotein hormones subunit beta family. In terms of assembly, heterodimer of a common alpha chain and a unique beta chain which confers biological specificity to thyrotropin, lutropin, follitropin and gonadotropin.

The protein localises to the secreted. Indispensable for the control of thyroid structure and metabolism. The protein is Thyrotropin subunit beta (TSHB) of Equus caballus (Horse).